Consider the following 707-residue polypeptide: Ribosomal RNA large subunit methyltransferase K/L (707 aa).

The THUMP domain maps to 43–154 (QIYRCCLWSR…KDKAILGVDM (112 aa)).

The protein belongs to the methyltransferase superfamily. RlmKL family.

Its subcellular location is the cytoplasm. The enzyme catalyses guanosine(2445) in 23S rRNA + S-adenosyl-L-methionine = N(2)-methylguanosine(2445) in 23S rRNA + S-adenosyl-L-homocysteine + H(+). The catalysed reaction is guanosine(2069) in 23S rRNA + S-adenosyl-L-methionine = N(2)-methylguanosine(2069) in 23S rRNA + S-adenosyl-L-homocysteine + H(+). Its function is as follows. Specifically methylates the guanine in position 2445 (m2G2445) and the guanine in position 2069 (m7G2069) of 23S rRNA. The protein is Ribosomal RNA large subunit methyltransferase K/L of Vibrio campbellii (strain ATCC BAA-1116).